A 173-amino-acid polypeptide reads, in one-letter code: Photosystem I assembly protein Ycf3 (173 aa).

TPR repeat units follow at residues 35-68 (AFAY…EEDP), 72-105 (SFIL…NPKM), and 120-153 (GQRS…APNN).

Belongs to the Ycf3 family.

It is found in the cellular thylakoid membrane. In terms of biological role, essential for the assembly of the photosystem I (PSI) complex. May act as a chaperone-like factor to guide the assembly of the PSI subunits. In Synechococcus elongatus (strain ATCC 33912 / PCC 7942 / FACHB-805) (Anacystis nidulans R2), this protein is Photosystem I assembly protein Ycf3.